The following is a 299-amino-acid chain: 6-phosphogluconate dehydrogenase, NAD(+)-dependent, decarboxylating (299 aa).

Residues 7–12 (GLGRMG), 67–69 (VPA), and Asn95 contribute to the NAD(+) site. Residues Asn95, Ser118, and Gly120 each coordinate substrate. The active-site Proton acceptor is Lys169. 172-173 (HN) is a substrate binding site. Glu176 functions as the Proton donor in the catalytic mechanism. Tyr177 and Arg268 together coordinate substrate.

This sequence belongs to the 6-phosphogluconate dehydrogenase family. Homotetramer.

The catalysed reaction is 6-phospho-D-gluconate + NAD(+) = D-ribulose 5-phosphate + CO2 + NADH. It functions in the pathway carbohydrate degradation; pentose phosphate pathway. Catalyzes the oxidative decarboxylation of 6-phosphogluconate to ribulose 5-phosphate and CO(2), with concomitant reduction of NAD to NADH. The polypeptide is 6-phosphogluconate dehydrogenase, NAD(+)-dependent, decarboxylating (Haloferax volcanii (strain ATCC 29605 / DSM 3757 / JCM 8879 / NBRC 14742 / NCIMB 2012 / VKM B-1768 / DS2) (Halobacterium volcanii)).